Here is a 309-residue protein sequence, read N- to C-terminus: Protein FdhE homolog (309 aa).

It belongs to the FdhE family.

It localises to the cytoplasm. Functionally, necessary for formate dehydrogenase activity. This is Protein FdhE homolog from Yersinia enterocolitica serotype O:8 / biotype 1B (strain NCTC 13174 / 8081).